Here is a 407-residue protein sequence, read N- to C-terminus: Probable endo-beta-1,4-glucanase celB (407 aa).

The signal sequence occupies residues 1 to 18 (MAQTLAAASLVLVPLVTA). A glycan (N-linked (GlcNAc...) asparagine) is linked at Asn-136. Glu-216 (nucleophile) is an active-site residue. The active-site Proton donor is Glu-221.

It belongs to the glycosyl hydrolase 7 (cellulase C) family.

The protein resides in the secreted. It carries out the reaction Endohydrolysis of (1-&gt;4)-beta-D-glucosidic linkages in cellulose, lichenin and cereal beta-D-glucans.. Has endoglucanase activity on substrates containing beta-1,4 glycosidic bonds, like in carboxymethylcellulose (CMC), hydroxyethylcellulose (HEC) and beta-glucan. Involved in the degradation of complex natural cellulosic substrates. The protein is Probable endo-beta-1,4-glucanase celB (celB) of Aspergillus fumigatus (strain ATCC MYA-4609 / CBS 101355 / FGSC A1100 / Af293) (Neosartorya fumigata).